Reading from the N-terminus, the 324-residue chain is Cytochrome f (324 aa).

An N-terminal signal peptide occupies residues 1–30 (MNMRFSPKALVRQLGRLSLVACLSLGLLGA). Positions 42, 62, 65, and 66 each coordinate heme. A helical membrane pass occupies residues 290–310 (VLGVIAFFFAVMLAQIMLVLK).

This sequence belongs to the cytochrome f family. In terms of assembly, the 4 large subunits of the cytochrome b6-f complex are cytochrome b6, subunit IV (17 kDa polypeptide, PetD), cytochrome f and the Rieske protein, while the 4 small subunits are PetG, PetL, PetM and PetN. The complex functions as a dimer. Heme serves as cofactor.

Its subcellular location is the cellular thylakoid membrane. Component of the cytochrome b6-f complex, which mediates electron transfer between photosystem II (PSII) and photosystem I (PSI), cyclic electron flow around PSI, and state transitions. The chain is Cytochrome f from Synechococcus elongatus (strain ATCC 33912 / PCC 7942 / FACHB-805) (Anacystis nidulans R2).